A 456-amino-acid polypeptide reads, in one-letter code: CBL-interacting serine/threonine-protein kinase 2 (456 aa).

The Protein kinase domain occupies 12–266; sequence YEVGRLLGQG…IAKIKESSWF (255 aa). ATP is bound by residues 18 to 26 and K41; that span reads LGQGTFAKV. Catalysis depends on D134, which acts as the Proton acceptor. Residues 152 to 181 are activation loop; sequence DFGLSALADCKRQDGLLHTTCGTPAYVAPE. S156 is modified (phosphoserine). The residue at position 170 (T170) is a Phosphothreonine. The interval 280 to 309 is disordered; sequence MEKQQVREATNPMEAGGSGQNENGENHEPP. Residues 309–333 form the NAF domain; sequence PRLATLNAFDIIALSTGFGLAGLFG. Positions 338–367 are PPI; it reads KRESRFASQKPASEIISKLVEVAKCLKLKI.

Belongs to the protein kinase superfamily. CAMK Ser/Thr protein kinase family. SNF1 subfamily. As to quaternary structure, interacts with CBL2, CBL3 and CBL5. Requires Mn(2+) as cofactor.

It catalyses the reaction L-seryl-[protein] + ATP = O-phospho-L-seryl-[protein] + ADP + H(+). The enzyme catalyses L-threonyl-[protein] + ATP = O-phospho-L-threonyl-[protein] + ADP + H(+). Functionally, CIPK serine-threonine protein kinases interact with CBL proteins. Binding of a CBL protein to the regulatory NAF domain of CIPK protein lead to the activation of the kinase in a calcium-dependent manner. The polypeptide is CBL-interacting serine/threonine-protein kinase 2 (CIPK2) (Arabidopsis thaliana (Mouse-ear cress)).